The primary structure comprises 423 residues: Gamma-glutamyl phosphate reductase (423 aa).

Belongs to the gamma-glutamyl phosphate reductase family.

The protein localises to the cytoplasm. It catalyses the reaction L-glutamate 5-semialdehyde + phosphate + NADP(+) = L-glutamyl 5-phosphate + NADPH + H(+). It functions in the pathway amino-acid biosynthesis; L-proline biosynthesis; L-glutamate 5-semialdehyde from L-glutamate: step 2/2. In terms of biological role, catalyzes the NADPH-dependent reduction of L-glutamate 5-phosphate into L-glutamate 5-semialdehyde and phosphate. The product spontaneously undergoes cyclization to form 1-pyrroline-5-carboxylate. This chain is Gamma-glutamyl phosphate reductase, found in Burkholderia vietnamiensis (strain G4 / LMG 22486) (Burkholderia cepacia (strain R1808)).